A 3336-amino-acid polypeptide reads, in one-letter code: Pericentrin (3336 aa).

2 disordered regions span residues 1–71 (MEVE…DICK) and 81–100 (GAGG…KRED). Over residues 27 to 37 (TKGDSSHSEKK) the composition is skewed to basic and acidic residues. Position 44 is a phosphoserine (serine 44). A Phosphoserine modification is found at serine 188. Threonine 191 carries the phosphothreonine modification. Residues 258 to 553 (HTAQLELTQA…RLQGAREDAL (296 aa)) adopt a coiled-coil conformation. The disordered stretch occupies residues 569-589 (KPEKGRKDHVDELEPERHKES). Phosphoserine is present on residues serine 610 and serine 682. 2 coiled-coil regions span residues 675 to 835 (TEHK…DALH) and 1010 to 1146 (TILT…MLKA). Serine 1245 is modified (phosphoserine). Residues 1299-1949 (NEETAQVVRK…FLRCQVELDR (651 aa)) are a coiled coil. The segment at 1619–1638 (TLDAGRCPEPPSGSPPEGPE) is disordered. Pro residues predominate over residues 1626 to 1636 (PEPPSGSPPEG). Residues serine 1653 and serine 1712 each carry the phosphoserine modification. Positions 1954-1974 (RATAHTRVPGAHPQPRMDGGA) are disordered. Serine 2044 is subject to Phosphoserine. A coiled-coil region spans residues 2064–2082 (VDLVAQVKQLQEKLNRLLY). The interval 2168–2214 (SLIPDEMPDSPIQEKSECQDMSLSSPTSVLGGSRHQSHTAEAGPRKS) is disordered. Phosphoserine occurs at positions 2177, 2192, 2225, 2226, and 2327. Polar residues predominate over residues 2186–2197 (QDMSLSSPTSVL). Positions 2318 to 2374 (SFDSQETLSSPPPGLEGKADRSEKSDGSGFGARLSPGSGGPEAQTAGPVTPASISGR) are disordered. The segment covering 2334–2343 (GKADRSEKSD) has biased composition (basic and acidic residues). Phosphoserine is present on residues serine 2352, serine 2355, serine 2477, and serine 2486. Residues 2536 to 3086 (QEKLQHLRTA…EKLLKHHLQK (551 aa)) are a coiled coil. Disordered regions lie at residues 2875 to 2910 (LEQS…WRKW) and 3084 to 3126 (LQKG…EEAH). 2 stretches are compositionally biased toward basic and acidic residues: residues 2876–2896 (EQSH…RSAE) and 3092–3102 (RSERSAWKPDE). An interaction with NEK2 region spans residues 2983-3246 (LSAARLLTSF…ARQPQSPPRT (264 aa)). Residues 3195-3208 (RFRTAVRVVIAILR) are calmodulin-binding. The segment at 3224–3300 (ALAQGKAPRP…RSLTASQDPE (77 aa)) is disordered. Residues 3226 to 3240 (AQGKAPRPGPRARQP) show a composition bias toward low complexity. Positions 3283–3297 (PSPNSRLERSLTASQ) are enriched in polar residues. At serine 3302 the chain carries Phosphoserine.

As to quaternary structure, interacts with CHD3. Interacts with CHD4; the interaction regulates centrosome integrity. Interacts with DISC1 and PCM1. Binds calmodulin. Interacts with CDK5RAP2; the interaction is leading to centrosomal localization of PCNT and CDK5RAP2. Interacts with isoform 1 of NEK2. Interacts with CEP131. Interacts with CCDC13. Interacts with CEP68. Interacts with ATF5; the ATF5:PCNT:polyglutamylated tubulin (PGT) tripartite unites the mother centriole and the pericentriolar material (PCM) in the centrosome. In terms of processing, cleaved during mitotis which leads to removal of CDK5RAP2 from the centrosome and promotes centriole disengagement and subsequent centriole separation. The C-terminal fragment is rapidly degraded following cleavage. Post-translationally, ubiquitinated by TRIM43; leading to proteasomal degradation. In terms of tissue distribution, expressed in all tissues tested, including placenta, liver, kidney and thymus.

The protein resides in the cytoplasm. It is found in the cytoskeleton. The protein localises to the microtubule organizing center. It localises to the centrosome. Integral component of the filamentous matrix of the centrosome involved in the initial establishment of organized microtubule arrays in both mitosis and meiosis. Plays a role, together with DISC1, in the microtubule network formation. Is an integral component of the pericentriolar material (PCM). May play an important role in preventing premature centrosome splitting during interphase by inhibiting NEK2 kinase activity at the centrosome. In Homo sapiens (Human), this protein is Pericentrin (PCNT).